Consider the following 247-residue polypeptide: 14-3-3 protein gamma (247 aa).

Met-1 carries the N-acetylmethionine modification. Residue Val-2 is modified to N-acetylvaline; in 14-3-3 protein gamma, N-terminally processed. An interaction with SPATA18/MIEAP region spans residues Val-2 to Asn-247. Phosphoserine is present on Ser-71. A Phosphotyrosine modification is found at Tyr-133. Thr-145 is modified (phosphothreonine). Ser-215 carries the post-translational modification Phosphoserine. Residue Thr-234 is modified to Phosphothreonine. Ser-235 is modified (phosphoserine).

It belongs to the 14-3-3 family. In terms of assembly, homodimer. Part of a complex that contains DSG3, PKP1, YAP1 and YWHAG; the complex is required for localization of DSG3 and YAP1 to the cell membrane in keratinocytes. Interacts with SAMSN1. Interacts with RAF1, SSH1 and CRTC2/TORC2. Interacts with ABL1 (phosphorylated form); the interaction retains it in the cytoplasm. Interacts with GAB2. Interacts with MDM4 (phosphorylated); negatively regulates MDM4 activity toward TP53. Interacts with PKA-phosphorylated AANAT and SIRT2. Interacts with the 'Thr-369' phosphorylated form of DAPK2. Interacts with PI4KB, TBC1D22A and TBC1D22B. Interacts with SLITRK1. Interacts with LRRK2; this interaction is dependent on LRRK2 phosphorylation. Interacts with MARK2 and MARK3. Interacts with MEFV. Interacts with ENDOG, TSC2 and PIK3C3; interaction with ENDOG weakens its interaction with TSC2 and PIK3C3. Interacts with (phosphorylated) WDR24. Interacts with BEST1; this interaction promotes L-glutamate channel activity leading to the positive regulation of NMDA glutamate receptor activity through the L-glutamate secretion. Interacts with PKP1 (when phosphorylated); the interaction results in translocation of PKP1 to the cytoplasm and loss of intercellular adhesion in keratinocytes. Interacts with SPATA18/MIEAP; a protein that also plays a role in MALM. Post-translationally, phosphorylated by various PKC isozymes.

Its subcellular location is the cytoplasm. The protein resides in the cytosol. It localises to the mitochondrion matrix. Adapter protein implicated in the regulation of a large spectrum of both general and specialized signaling pathways. Binds to a large number of partners, usually by recognition of a phosphoserine or phosphothreonine motif. Binding generally results in the modulation of the activity of the binding partner. Promotes inactivation of WDR24 component of the GATOR2 complex by binding to phosphorylated WDR24. Participates in the positive regulation of NMDA glutamate receptor activity by promoting the L-glutamate secretion through interaction with BEST1. Reduces keratinocyte intercellular adhesion, via interacting with PKP1 and sequestering it in the cytoplasm, thereby reducing its incorporation into desmosomes. Plays a role in mitochondrial protein catabolic process (also named MALM) that promotes the degradation of damaged proteins inside mitochondria. The chain is 14-3-3 protein gamma from Bos taurus (Bovine).